The following is a 429-amino-acid chain: Glutamate-1-semialdehyde 2,1-aminomutase (429 aa).

N6-(pyridoxal phosphate)lysine is present on Lys266.

This sequence belongs to the class-III pyridoxal-phosphate-dependent aminotransferase family. HemL subfamily. The cofactor is pyridoxal 5'-phosphate.

It is found in the cytoplasm. It carries out the reaction (S)-4-amino-5-oxopentanoate = 5-aminolevulinate. Its pathway is porphyrin-containing compound metabolism; protoporphyrin-IX biosynthesis; 5-aminolevulinate from L-glutamyl-tRNA(Glu): step 2/2. This Aeropyrum pernix (strain ATCC 700893 / DSM 11879 / JCM 9820 / NBRC 100138 / K1) protein is Glutamate-1-semialdehyde 2,1-aminomutase (hemL).